The chain runs to 383 residues: tRNA-specific 2-thiouridylase MnmA (383 aa).

ATP-binding positions include 29 to 36 (GMSGGVDS) and Met55. The tract at residues 115–117 (NPD) is interaction with target base in tRNA. Cys120 serves as the catalytic Nucleophile. An intrachain disulfide couples Cys120 to Cys217. Gly145 contacts ATP. An interaction with tRNA region spans residues 167–169 (KDQ). Catalysis depends on Cys217, which acts as the Cysteine persulfide intermediate. The tract at residues 329–330 (RY) is interaction with tRNA.

This sequence belongs to the MnmA/TRMU family.

It localises to the cytoplasm. It catalyses the reaction S-sulfanyl-L-cysteinyl-[protein] + uridine(34) in tRNA + AH2 + ATP = 2-thiouridine(34) in tRNA + L-cysteinyl-[protein] + A + AMP + diphosphate + H(+). Functionally, catalyzes the 2-thiolation of uridine at the wobble position (U34) of tRNA, leading to the formation of s(2)U34. The protein is tRNA-specific 2-thiouridylase MnmA of Pasteurella multocida (strain Pm70).